Consider the following 867-residue polypeptide: uncharacterized protein (867 aa).

The segment at residues 76-108 is a DNA-binding region (zn(2)-C6 fungal-type); that stretch reads CDFCRQKKIRCDMDQSPRPGNACINCRKHHLDC. Disordered regions lie at residues 110–167 and 217–257; these read FTRT…ITPV and PQLA…NSNL. 2 stretches are compositionally biased toward polar residues: residues 137 to 167 and 248 to 257; these read SAKS…ITPV and SISSYTNSNL.

Its subcellular location is the nucleus. This is an uncharacterized protein from Schizosaccharomyces pombe (strain 972 / ATCC 24843) (Fission yeast).